Consider the following 86-residue polypeptide: Splicing factor 3B subunit 5 (86 aa).

Thr2 bears the N-acetylthreonine mark. Position 9 is a phosphoserine (Ser9). The segment at 15-76 (QSKYIGTGHA…NLMEKMLQPC (62 aa)) is interaction with SF3B1 and SF3B3. An N6-acetyllysine modification is found at Lys17.

Belongs to the SF3B5 family. In terms of assembly, component of the 17S U2 SnRNP complex, a ribonucleoprotein complex that contains small nuclear RNA (snRNA) U2 and a number of specific proteins. Part of the SF3B subcomplex of the 17S U2 SnRNP complex. SF3B associates with the splicing subcomplex SF3A and a 12S RNA unit to form the U2 small nuclear ribonucleoproteins complex (U2 snRNP). Within the SF3B subcomplex, interacts directly with SF3B1 (via HEAT domain) and SF3B3. Component of the minor spliceosome, which splices U12-type introns.

It localises to the nucleus. In terms of biological role, component of the 17S U2 SnRNP complex of the spliceosome, a large ribonucleoprotein complex that removes introns from transcribed pre-mRNAs. The 17S U2 SnRNP complex (1) directly participates in early spliceosome assembly and (2) mediates recognition of the intron branch site during pre-mRNA splicing by promoting the selection of the pre-mRNA branch-site adenosine, the nucleophile for the first step of splicing. Within the 17S U2 SnRNP complex, SF3B4 is part of the SF3B subcomplex, which is required for 'A' complex assembly formed by the stable binding of U2 snRNP to the branchpoint sequence in pre-mRNA. Sequence independent binding of SF3A and SF3B subcomplexes upstream of the branch site is essential, it may anchor U2 snRNP to the pre-mRNA. Also acts as a component of the minor spliceosome, which is involved in the splicing of U12-type introns in pre-mRNAs. This Bos taurus (Bovine) protein is Splicing factor 3B subunit 5 (SF3B5).